The primary structure comprises 452 residues: MKASAVTAALAVGASTVLAAPSIKARDDVTPITVKGNAFFKGAERFYIRGVDYQPGGSSDLADPIADADGCKRDIAKFKELGLNTIRVYSVDNSKNHDECMNALADAGIYLVLDVNTPKYSINRAKPKESYNDVYLQYIFATVDAFAGYKNTLAFFSGNEVINDGPSSSAAPYVKAVTRDLRQYIRSRKYREIPVGYSAADIDTNRLQMAQYMNCGSDDERSDFFAFNDYSWCDPSSFKTSGWDQKVKNFTGYGLPLFLSEYGCNTNKRQFQEVSSLYSTDMTGVYSGGLVYEYSQEASNYGLVEISGNNVKELPDFDALKTAFEKTSNPSGDGNYNKTGGANPCPAKDAPNWDVDNDALPAIPEPAKKYMTEGAGKGPGFAGPGSQDRGTQSTATAEPGSGSATGSSSSGTSTSSKGAAAGLTVPSLTMAPVVVGAVTLLSTVFGAGLVLL.

The first 19 residues, 1-19, serve as a signal peptide directing secretion; it reads MKASAVTAALAVGASTVLA. A disulfide bridge connects residues Cys71 and Cys100. Residues Tyr89, Asn159, Glu160, Asp201, and Arg206 each contribute to the (1,3-beta-D-glucosyl)n site. Glu160 functions as the Proton donor in the catalytic mechanism. Intrachain disulfides connect Cys215/Cys345 and Cys233/Cys264. A glycan (N-linked (GlcNAc...) asparagine) is linked at Asn249. Catalysis depends on Glu261, which acts as the Nucleophile. Tyr292 contributes to the (1,3-beta-D-glucosyl)n binding site. The segment covering 325 to 340 has biased composition (polar residues); the sequence is EKTSNPSGDGNYNKTG. The disordered stretch occupies residues 325-419; that stretch reads EKTSNPSGDG…SGTSTSSKGA (95 aa). Asn337 is a glycosylation site (N-linked (GlcNAc...) asparagine). The span at 393–419 shows a compositional bias: low complexity; the sequence is STATAEPGSGSATGSSSSGTSTSSKGA. The GPI-like-anchor amidated alanine moiety is linked to residue Ala419. The propeptide at 420–452 is removed in mature form; it reads AAGLTVPSLTMAPVVVGAVTLLSTVFGAGLVLL.

Belongs to the glycosyl hydrolase 72 family. Post-translationally, the GPI-like anchor contains a phosphoceramide lipid group.

It localises to the cell membrane. Functionally, splits internally a 1,3-beta-glucan molecule and transfers the newly generated reducing end (the donor) to the non-reducing end of another 1,3-beta-glucan molecule (the acceptor) forming a 1,3-beta linkage, resulting in the elongation of 1,3-beta-glucan chains in the cell wall. Involved in cell wall morphogenesis. In Aspergillus fumigatus (strain ATCC MYA-4609 / CBS 101355 / FGSC A1100 / Af293) (Neosartorya fumigata), this protein is 1,3-beta-glucanosyltransferase gel1 (gel1).